The following is a 207-amino-acid chain: uncharacterized protein (207 aa).

A signal peptide spans 1–19; it reads MRFNVSFLLSLLLPTLAFA.

This sequence to P.multocida PM1509.

This is an uncharacterized protein from Pasteurella multocida (strain Pm70).